We begin with the raw amino-acid sequence, 130 residues long: Ribonuclease P protein component 2 (130 aa).

It belongs to the eukaryotic/archaeal RNase P protein component 2 family. Consists of a catalytic RNA component and at least 4-5 protein subunits.

It localises to the cytoplasm. It carries out the reaction Endonucleolytic cleavage of RNA, removing 5'-extranucleotides from tRNA precursor.. Its function is as follows. Part of ribonuclease P, a protein complex that generates mature tRNA molecules by cleaving their 5'-ends. This chain is Ribonuclease P protein component 2, found in Methanococcus maripaludis (strain C6 / ATCC BAA-1332).